Here is a 408-residue protein sequence, read N- to C-terminus: S-adenosylmethionine synthase (408 aa).

H19 provides a ligand contact to ATP. D21 lines the Mg(2+) pocket. Position 47 (E47) interacts with K(+). The L-methionine site is built by E60 and Q104. The tract at residues Q104–H114 is flexible loop. Residues D185–K187, R255–F256, D264, R270–K271, A287, and K291 contribute to the ATP site. D264 serves as a coordination point for L-methionine. An L-methionine-binding site is contributed by K295.

Belongs to the AdoMet synthase family. As to quaternary structure, homotetramer; dimer of dimers. The cofactor is Mg(2+). Requires K(+) as cofactor.

It is found in the cytoplasm. It carries out the reaction L-methionine + ATP + H2O = S-adenosyl-L-methionine + phosphate + diphosphate. The protein operates within amino-acid biosynthesis; S-adenosyl-L-methionine biosynthesis; S-adenosyl-L-methionine from L-methionine: step 1/1. Functionally, catalyzes the formation of S-adenosylmethionine (AdoMet) from methionine and ATP. The overall synthetic reaction is composed of two sequential steps, AdoMet formation and the subsequent tripolyphosphate hydrolysis which occurs prior to release of AdoMet from the enzyme. This is S-adenosylmethionine synthase from Deinococcus radiodurans (strain ATCC 13939 / DSM 20539 / JCM 16871 / CCUG 27074 / LMG 4051 / NBRC 15346 / NCIMB 9279 / VKM B-1422 / R1).